The sequence spans 1108 residues: Activity-dependent neuroprotector homeobox protein (1108 aa).

Residues 1 to 685 form a binds to beta-catenin/CTNNB1 region; that stretch reads MFQLPVNNLG…ASTITLHLVH (685 aa). Residues Lys-39 and Lys-72 each participate in a glycyl lysine isopeptide (Lys-Gly) (interchain with G-Cter in SUMO2) cross-link. Residues 74 to 97 form a C2H2-type 1; degenerate zinc finger; it reads FCCSACPFSSKFFSAYKSHFRNVH. Phosphoserine is present on Ser-98. Residues 107–129 form a C2H2-type 2; degenerate zinc finger; the sequence is LNCPYCTFNADKKTLETHIKIFH. Residues 133 to 154 form a disordered region; that stretch reads SSAPSSSLSTFKDKNKNDGLKP. Residues 143–154 show a composition bias toward basic and acidic residues; the sequence is FKDKNKNDGLKP. Glycyl lysine isopeptide (Lys-Gly) (interchain with G-Cter in SUMO2) cross-links involve residues Lys-144 and Lys-155. The segment at 165-188 adopts a C2H2-type 3; degenerate zinc-finger fold; sequence YYCKKCTYRDPLYEIVRKHIYREH. Glycyl lysine isopeptide (Lys-Gly) (interchain with G-Cter in SUMO2) cross-links involve residues Lys-203, Lys-231, Lys-266, Lys-274, Lys-278, Lys-279, Lys-311, and Lys-335. The C2H2-type 4; degenerate zinc finger occupies 221-244; sequence IHCKRCLFMPKSYEALVQHVIEDH. Arg-348 is subject to Asymmetric dimethylarginine. The segment at 354–361 is neuroprotective peptide; contributes to CTNNB1-binding, but less effective than whole N-terminal region; sequence NAPVSIPQ. A disordered region spans residues 360–438; it reads PQQSQSVKQL…PAATGPPPSN (79 aa). Residues Lys-367 and Lys-407 each participate in a glycyl lysine isopeptide (Lys-Gly) (interchain with G-Cter in SUMO2) cross-link. A compositionally biased stretch (polar residues) spans 393-422; it reads SLQTANTSLPPGQVKSPSVSQSQASRVLGQ. Phosphoserine is present on residues Ser-408 and Ser-412. Lys-426 is covalently cross-linked (Glycyl lysine isopeptide (Lys-Gly) (interchain with G-Cter in SUMO2)). Pro residues predominate over residues 426–437; it reads KPPPAATGPPPS. The segment at 446-468 adopts a C2H2-type 5; atypical zinc-finger fold; it reads KICTICNELFPENVYSVHFEKEH. 2 C2H2-type zinc fingers span residues 488–509 and 511–534; these read SKCL…MLIH and LSCP…RMVH. Glycyl lysine isopeptide (Lys-Gly) (interchain with G-Cter in SUMO2) cross-links involve residues Lys-599 and Lys-605. Ser-607 bears the Phosphoserine mark. Glycyl lysine isopeptide (Lys-Gly) (interchain with G-Cter in SUMO2) cross-links involve residues Lys-615, Lys-620, Lys-631, and Lys-657. Residues 621 to 646 form a C2H2-type 8; atypical zinc finger; that stretch reads TLCPLCFSILKGPISDALAHHLRERH. Residues 661–685 form a C2H2-type 9; atypical zinc finger; that stretch reads YKCIHCLGVYTSNMTASTITLHLVH. Positions 690-711 are disordered; sequence GKTQNGQDKTNAPSRLNQSPGL. Residues 691-709 are compositionally biased toward polar residues; that stretch reads KTQNGQDKTNAPSRLNQSP. A Glycyl lysine isopeptide (Lys-Gly) (interchain with G-Cter in SUMO2) cross-link involves residue Lys-698. The residue at position 708 (Ser-708) is a Phosphoserine. Glycyl lysine isopeptide (Lys-Gly) (interchain with G-Cter in SUMO2) cross-links involve residues Lys-715, Lys-727, and Lys-730. Ser-737 is modified (phosphoserine). A Glycyl lysine isopeptide (Lys-Gly) (interchain with G-Cter in SUMO2) cross-link involves residue Lys-744. A DNA-binding region (homeobox) is located at residues 753–813; it reads LDPKGHEDDS…SNKRKKCVRD (61 aa). The residue at position 804 (Ser-804) is a Phosphoserine. Glycyl lysine isopeptide (Lys-Gly) (interchain with G-Cter in SUMO2) cross-links involve residues Lys-806, Lys-828, and Lys-834. The segment covering 851-880 has biased composition (basic and acidic residues); sequence KDSRVNASKTVDKKHNLGKEDDSFSDSFEH. A disordered region spans residues 851–1037; that stretch reads KDSRVNASKT…DTEQLKWKNS (187 aa). 5 positions are modified to phosphoserine: Ser-875, Ser-877, Ser-885, Ser-888, and Ser-904. Glycyl lysine isopeptide (Lys-Gly) (interchain with G-Cter in SUMO2) cross-links involve residues Lys-913, Lys-928, and Lys-941. Residues 928–938 show a composition bias toward acidic residues; the sequence is KEEEEEEEEED. A compositionally biased stretch (basic and acidic residues) spans 939–959; the sequence is GSKYETIHLTEEPAKLMHDAS. 2 positions are modified to phosphoserine: Ser-959 and Ser-961. Residues 977 to 988 show a composition bias toward polar residues; sequence PSESGPGSQQIS. Lys-1022 participates in a covalent cross-link: Glycyl lysine isopeptide (Lys-Gly) (interchain with G-Cter in SUMO2). Residues Lys-1041 and Lys-1048 each carry the N6-acetyllysine; alternate modification. Glycyl lysine isopeptide (Lys-Gly) (interchain with G-Cter in SUMO2); alternate cross-links involve residues Lys-1041 and Lys-1048. Residues 1050–1108 are disordered; sequence QSQWENASENAERLPNPQIEWQNSTIDSEDGEQFDSMTDGVADPMHGSLTGVKLSSQQA. Ser-1077 bears the Phosphoserine mark.

Interacts (via N-terminal region) with beta-catenin/CTNNB1 (via the central armadillo domains); interaction is direct and stabilizes CTNNB1 by modulating its phosphorylation by glycogen synthase kinase-3 beta GSK3B. In terms of tissue distribution, expressed in the brain, with a higher expression in cerebellum and hippocampus. Weakly expressed in lung, kidney and intestine, and expressed at intermediate level in testis.

Its subcellular location is the nucleus. The protein localises to the chromosome. May be involved in transcriptional regulation. May mediate some of the neuroprotective peptide VIP-associated effects involving normal growth and cancer proliferation. Positively modulates WNT-beta-catenin/CTNN1B signaling, acting by regulating phosphorylation of, and thereby stabilizing, CTNNB1. May be required for neural induction and neuronal differentiation. May be involved in erythroid differentiation. The polypeptide is Activity-dependent neuroprotector homeobox protein (Adnp) (Mus musculus (Mouse)).